The primary structure comprises 66 residues: Large ribosomal subunit protein eL24 (66 aa).

Cysteine 6, cysteine 9, cysteine 32, and cysteine 36 together coordinate Zn(2+). The C4-type zinc finger occupies 6-36 (CSFCGKSIEPASGFLYVRKDGSVLNFCSRKC).

This sequence belongs to the eukaryotic ribosomal protein eL24 family. As to quaternary structure, part of the 50S ribosomal subunit. Forms a cluster with proteins L3 and L14. Zn(2+) is required as a cofactor.

Its function is as follows. Binds to the 23S rRNA. The protein is Large ribosomal subunit protein eL24 of Picrophilus torridus (strain ATCC 700027 / DSM 9790 / JCM 10055 / NBRC 100828 / KAW 2/3).